Consider the following 102-residue polypeptide: Large ribosomal subunit protein bL21 (102 aa).

This sequence belongs to the bacterial ribosomal protein bL21 family. In terms of assembly, part of the 50S ribosomal subunit. Contacts protein L20.

Its function is as follows. This protein binds to 23S rRNA in the presence of protein L20. This chain is Large ribosomal subunit protein bL21, found in Stenotrophomonas maltophilia (strain K279a).